Here is a 358-residue protein sequence, read N- to C-terminus: Protein FAM187B (358 aa).

The N-terminal stretch at 1 to 17 (MLATLWLVGLSLPMLWA) is a signal peptide. Residues 18–322 (QRLISCPYKN…DKADSVLRRL (305 aa)) lie on the Extracellular side of the membrane. A glycan (N-linked (GlcNAc...) asparagine) is linked at N127. The chain crosses the membrane as a helical span at residues 323–343 (KLMVLSISVLAVGGLLCKVVF). The Cytoplasmic segment spans residues 344–358 (RPVCGKKRSQVLLVK).

It belongs to the FAM187 family.

It localises to the membrane. The protein is Protein FAM187B (Fam187b) of Mus musculus (Mouse).